The following is a 156-amino-acid chain: Small ribosomal subunit protein uS7 (156 aa).

It belongs to the universal ribosomal protein uS7 family. Part of the 30S ribosomal subunit. Contacts proteins S9 and S11.

One of the primary rRNA binding proteins, it binds directly to 16S rRNA where it nucleates assembly of the head domain of the 30S subunit. Is located at the subunit interface close to the decoding center, probably blocks exit of the E-site tRNA. The sequence is that of Small ribosomal subunit protein uS7 from Clavibacter sepedonicus (Clavibacter michiganensis subsp. sepedonicus).